The chain runs to 399 residues: Bifunctional enzyme IspD/IspF (399 aa).

A 2-C-methyl-D-erythritol 4-phosphate cytidylyltransferase region spans residues 1-239; it reads MHTWALLLAA…SSEKKNMQVP (239 aa). The 2-C-methyl-D-erythritol 2,4-cyclodiphosphate synthase stretch occupies residues 240 to 399; the sequence is CVGWGYDVHR…AVTALRRVSS (160 aa). The a divalent metal cation site is built by Asp246 and His248. Residues 246–248 and 273–274 contribute to the 4-CDP-2-C-methyl-D-erythritol 2-phosphate site; these read DVH and HS. Position 281 (His281) interacts with a divalent metal cation. 4-CDP-2-C-methyl-D-erythritol 2-phosphate is bound by residues 295 to 297, 300 to 304, 371 to 374, and Phe378; these read DIG, FPDTD, and TTEE.

This sequence in the N-terminal section; belongs to the IspD/TarI cytidylyltransferase family. IspD subfamily. It in the C-terminal section; belongs to the IspF family. Requires a divalent metal cation as cofactor.

It carries out the reaction 2-C-methyl-D-erythritol 4-phosphate + CTP + H(+) = 4-CDP-2-C-methyl-D-erythritol + diphosphate. The enzyme catalyses 4-CDP-2-C-methyl-D-erythritol 2-phosphate = 2-C-methyl-D-erythritol 2,4-cyclic diphosphate + CMP. It participates in isoprenoid biosynthesis; isopentenyl diphosphate biosynthesis via DXP pathway; isopentenyl diphosphate from 1-deoxy-D-xylulose 5-phosphate: step 2/6. Its pathway is isoprenoid biosynthesis; isopentenyl diphosphate biosynthesis via DXP pathway; isopentenyl diphosphate from 1-deoxy-D-xylulose 5-phosphate: step 4/6. Its function is as follows. Bifunctional enzyme that catalyzes the formation of 4-diphosphocytidyl-2-C-methyl-D-erythritol from CTP and 2-C-methyl-D-erythritol 4-phosphate (MEP) (IspD), and catalyzes the conversion of 4-diphosphocytidyl-2-C-methyl-D-erythritol 2-phosphate (CDP-ME2P) to 2-C-methyl-D-erythritol 2,4-cyclodiphosphate (ME-CPP) with a corresponding release of cytidine 5-monophosphate (CMP) (IspF). In Oleidesulfovibrio alaskensis (strain ATCC BAA-1058 / DSM 17464 / G20) (Desulfovibrio alaskensis), this protein is Bifunctional enzyme IspD/IspF.